Reading from the N-terminus, the 361-residue chain is Probable dual-specificity RNA methyltransferase RlmN (361 aa).

The active-site Proton acceptor is glutamate 102. A Radical SAM core domain is found at 108-344; the sequence is SGDRLTVCVS…VRWSKGLGAD (237 aa). Cysteine 115 and cysteine 347 form a disulfide bridge. Residues cysteine 122, cysteine 126, and cysteine 129 each coordinate [4Fe-4S] cluster. Residues 169 to 170, serine 199, 228 to 230, and asparagine 304 each bind S-adenosyl-L-methionine; these read GE and SLH. The active-site S-methylcysteine intermediate is the cysteine 347.

Belongs to the radical SAM superfamily. RlmN family. Requires [4Fe-4S] cluster as cofactor.

It is found in the cytoplasm. The enzyme catalyses adenosine(2503) in 23S rRNA + 2 reduced [2Fe-2S]-[ferredoxin] + 2 S-adenosyl-L-methionine = 2-methyladenosine(2503) in 23S rRNA + 5'-deoxyadenosine + L-methionine + 2 oxidized [2Fe-2S]-[ferredoxin] + S-adenosyl-L-homocysteine. It catalyses the reaction adenosine(37) in tRNA + 2 reduced [2Fe-2S]-[ferredoxin] + 2 S-adenosyl-L-methionine = 2-methyladenosine(37) in tRNA + 5'-deoxyadenosine + L-methionine + 2 oxidized [2Fe-2S]-[ferredoxin] + S-adenosyl-L-homocysteine. Its function is as follows. Specifically methylates position 2 of adenine 2503 in 23S rRNA and position 2 of adenine 37 in tRNAs. This is Probable dual-specificity RNA methyltransferase RlmN from Synechococcus elongatus (strain ATCC 33912 / PCC 7942 / FACHB-805) (Anacystis nidulans R2).